A 279-amino-acid chain; its full sequence is Tryptophan synthase alpha chain (279 aa).

Catalysis depends on proton acceptor residues Glu-50 and Asp-61.

This sequence belongs to the TrpA family. As to quaternary structure, tetramer of two alpha and two beta chains.

It carries out the reaction (1S,2R)-1-C-(indol-3-yl)glycerol 3-phosphate + L-serine = D-glyceraldehyde 3-phosphate + L-tryptophan + H2O. Its pathway is amino-acid biosynthesis; L-tryptophan biosynthesis; L-tryptophan from chorismate: step 5/5. The alpha subunit is responsible for the aldol cleavage of indoleglycerol phosphate to indole and glyceraldehyde 3-phosphate. The sequence is that of Tryptophan synthase alpha chain from Allorhizobium ampelinum (strain ATCC BAA-846 / DSM 112012 / S4) (Agrobacterium vitis (strain S4)).